A 171-amino-acid chain; its full sequence is Peptide deformylase (171 aa).

Residues cysteine 91 and histidine 133 each coordinate Fe cation. The active site involves glutamate 134. Fe cation is bound at residue histidine 137.

It belongs to the polypeptide deformylase family. The cofactor is Fe(2+).

The catalysed reaction is N-terminal N-formyl-L-methionyl-[peptide] + H2O = N-terminal L-methionyl-[peptide] + formate. Removes the formyl group from the N-terminal Met of newly synthesized proteins. Requires at least a dipeptide for an efficient rate of reaction. N-terminal L-methionine is a prerequisite for activity but the enzyme has broad specificity at other positions. This chain is Peptide deformylase, found in Haemophilus ducreyi (strain 35000HP / ATCC 700724).